The primary structure comprises 221 residues: MTDYDDYEDRSGVVEEELLDFDRAMLDFQAMFPSLSNSHIEYVLRKYDGDVSATINELLYDNTPTTTTSESIPHGGDLTKLRQRRHEINEKLRENQKFLDTVTDVEIARAYEDQQLALLLEHREVNTLISEEKKKKSCSDSSSIQESRRHVKIPGKNSKNSKISVNKAKKLEPRRRSDEDRVPDGPYIGEGEVKSENFAAKIKETLRKASGSRISRLFSAP.

One can recognise a CUE domain in the interval 20-63; it reads DFDRAMLDFQAMFPSLSNSHIEYVLRKYDGDVSATINELLYDNT. The tract at residues 131 to 194 is disordered; it reads EEKKKKSCSD…GPYIGEGEVK (64 aa). A compositionally biased stretch (low complexity) spans 156 to 166; sequence KNSKNSKISVN. The segment covering 169–183 has biased composition (basic and acidic residues); the sequence is KKLEPRRRSDEDRVP.

This is an uncharacterized protein from Caenorhabditis elegans.